Reading from the N-terminus, the 487-residue chain is Signal recognition particle subunit SRP54 (487 aa).

Residues 1–295 (MVLSQLGSSL…DAESFVRKLL (295 aa)) form a G-domain region. GTP-binding positions include 108–115 (GLQGAGKT), 190–194 (DTSGR), and 248–251 (TKLD). The interval 296 to 487 (GMGDLKGIAK…LGGTGKKGKK (192 aa)) is M-domain.

This sequence belongs to the GTP-binding SRP family. SRP54 subfamily. Component of a signal recognition particle (SRP) complex that consists of a 7SL RNA molecule of 300 nucleotides and six protein subunits: SRP72, SRP68, SRP54, SRP19, SRP14 and SRP9.

The protein resides in the cytoplasm. Its subcellular location is the endoplasmic reticulum. It catalyses the reaction GTP + H2O = GDP + phosphate + H(+). In terms of biological role, component of the signal recognition particle (SRP) complex, a ribonucleoprotein complex that mediates the cotranslational targeting of secretory and membrane proteins to the endoplasmic reticulum (ER). As part of the SRP complex, associates with the SRP receptor (SR) component SRPRA to target secretory proteins to the endoplasmic reticulum membrane. Binds to the signal sequence of presecretory proteins when they emerge from the ribosomes. Displays basal GTPase activity, and stimulates reciprocal GTPase activation of the SR subunit SRPRA. Forms a guanosine 5'-triphosphate (GTP)-dependent complex with the SR subunit SRPRA. SR compaction and GTPase mediated rearrangement of SR drive SRP-mediated cotranslational protein translocation into the ER. Requires the presence of SRP9/SRP14 and/or SRP19 to stably interact with RNA. This chain is Signal recognition particle subunit SRP54, found in Entamoeba histolytica (strain ATCC 30459 / HM-1:IMSS / ABRM).